Here is a 535-residue protein sequence, read N- to C-terminus: T-complex protein 1 subunit beta (535 aa).

At Ala-2 the chain carries N-acetylalanine. Ser-3 carries the phosphoserine modification. Position 13 is an N6-acetyllysine (Lys-13). Residue Gly-44 coordinates ADP. Residue Gly-44 participates in ATP binding. A Phosphoserine modification is found at Ser-60. Residue Asp-97 participates in Mg(2+) binding. Residues Gly-98, Thr-99, Thr-100, and Ser-101 each coordinate ADP. ATP is bound by residues Gly-98, Thr-99, and Thr-100. Residue Lys-154 is modified to N6-acetyllysine. Ser-168 and Ser-169 together coordinate ADP. Lys-181 carries the N6-acetyllysine modification. Lys-248 is covalently cross-linked (Glycyl lysine isopeptide (Lys-Gly) (interchain with G-Cter in SUMO2)). Phosphoserine is present on Ser-260. At Thr-261 the chain carries Phosphothreonine. ADP is bound by residues Gly-410, Glu-495, and Lys-500. The ATP site is built by Glu-495 and Lys-500.

It belongs to the TCP-1 chaperonin family. Component of the chaperonin-containing T-complex (TRiC), a hexadecamer composed of two identical back-to-back stacked rings enclosing a protein folding chamber. Each ring is made up of eight different subunits: TCP1/CCT1, CCT2, CCT3, CCT4, CCT5, CCT6A/CCT6, CCT7, CCT8. Interacts with PACRG. Interacts with FLCN. Interacts with DLEC1. Interacts with SVEP1.

The protein localises to the cytoplasm. The catalysed reaction is ATP + H2O = ADP + phosphate + H(+). Its function is as follows. Component of the chaperonin-containing T-complex (TRiC), a molecular chaperone complex that assists the folding of actin, tubulin and other proteins upon ATP hydrolysis. The TRiC complex mediates the folding of WRAP53/TCAB1, thereby regulating telomere maintenance. As part of the TRiC complex may play a role in the assembly of BBSome, a complex involved in ciliogenesis regulating transports vesicles to the cilia. This chain is T-complex protein 1 subunit beta (Cct2), found in Rattus norvegicus (Rat).